The sequence spans 547 residues: Chaperonin GroEL (547 aa).

ATP contacts are provided by residues 30–33 (TLGP), K51, 87–91 (DGTTT), G415, 479–481 (NAA), and D495.

The protein belongs to the chaperonin (HSP60) family. As to quaternary structure, forms a cylinder of 14 subunits composed of two heptameric rings stacked back-to-back. Interacts with the co-chaperonin GroES.

Its subcellular location is the cytoplasm. It catalyses the reaction ATP + H2O + a folded polypeptide = ADP + phosphate + an unfolded polypeptide.. In terms of biological role, together with its co-chaperonin GroES, plays an essential role in assisting protein folding. The GroEL-GroES system forms a nano-cage that allows encapsulation of the non-native substrate proteins and provides a physical environment optimized to promote and accelerate protein folding. This Pseudomonas syringae pv. tomato (strain ATCC BAA-871 / DC3000) protein is Chaperonin GroEL.